The sequence spans 156 residues: Transmembrane inner ear expressed protein (156 aa).

The first 27 residues, 1–27, serve as a signal peptide directing secretion; sequence MAGWPGAGPLCVLGGAALGVCLAGVAG. The Extracellular segment spans residues 28 to 57; that stretch reads QLVEPSTAPPKPKPPPLTKETVVFWDMRLW. A helical membrane pass occupies residues 58-78; sequence HVVGIFSLFVLSIIITLCCVF. Over 79-156 the chain is Cytoplasmic; sequence NCRVPRTRKE…NEAKKKKGEK (78 aa). The tract at residues 113–135 is disordered; that stretch reads NELTEVPGEDKKKKKKKKKDSVD.

In terms of assembly, forms the MET channel composed of TMC (TMC1 or TMC2), TMIE, TOMT, CIB (CIB2 or CIB3), LHPL5 and PCDH15. As to expression, expressed in many tissues.

It is found in the membrane. In terms of biological role, auxiliary subunit of the mechanotransducer (MET) non-specific cation channel complex located at the tips of stereocilia of cochlear hair cells and that mediates sensory transduction in the auditory system. The MET complex is composed of two dimeric pore-forming ion-conducting transmembrane TMC (TMC1 or TMC2) subunits, and aided by several auxiliary proteins including LHFPL5, TMIE, CIB2/3 and TOMT, and the tip-link PCDH15. May contribute to the formation of the pore. This chain is Transmembrane inner ear expressed protein (TMIE), found in Homo sapiens (Human).